The sequence spans 622 residues: Leucine-rich repeat and immunoglobulin-like domain-containing nogo receptor-interacting protein 1-B (622 aa).

An N-terminal signal peptide occupies residues 1 to 43 (MTFLQVTIKMVAREASGHSYLVACWQPILILMLGTVLSGSATG). 2 cysteine pairs are disulfide-bonded: C44/C50 and C48/C59. The LRRNT domain occupies 44-73 (CPSRCECSAQERSVVCHRRKLITLPEGIPI). Residues 44–563 (CPSRCECSAQ…FDMKTLIIAT (520 aa)) are Extracellular-facing. LRR repeat units lie at residues 74 to 95 (DTRLLDLSKNRLKAINPEEFLN), 98 to 119 (QLEDLQLNENIISVIEPGAFSN), 122 to 143 (GLRTLGLRNNNLKLIQLGVFTG), 146 to 167 (NLTRLDISENKIVILLDYMFQE), 170 to 191 (NLKELEVGDNDLVFISHRAFHG), 194 to 215 (SLEQLTMERCNLTSVPTEAFSH), 218 to 239 (NLLTLKLRHLNVNVIRDFSFRR), 266 to 287 (NITTLSITNCNLTAVPYVAIQH), 290 to 311 (YLRFFNLSFNPIEVVEGNKMHN), 314 to 335 (RLQAFHLVGGRLVSIEPYSFKG), and 338 to 359 (YLRVLNVSSNSLSTLEESAFHS). The N-linked (GlcNAc...) asparagine glycan is linked to N146. N204 carries an N-linked (GlcNAc...) asparagine glycan. 3 N-linked (GlcNAc...) asparagine glycosylation sites follow: N266, N276, and N295. N343 carries an N-linked (GlcNAc...) asparagine glycan. The LRRCT domain maps to 371–425 (NPLACDCRLLWVFRRRWRLNFNRQQPSCETPEFLQGKEFKDFPDVLPPNYFTCQK). 3 cysteine pairs are disulfide-bonded: C375/C398, C377/C423, and C448/C499. An Ig-like C2-type domain is found at 413–515 (PDVLPPNYFT…GNDTRLAHLH (103 aa)). N494, N507, N528, and N544 each carry an N-linked (GlcNAc...) asparagine glycan. Residues 564–584 (TMGFISFLGVVLFCLVLLFLW) form a helical membrane-spanning segment. Residues 585-622 (SRGKGNAKPNIEIEYVPRKVDGENSPNEGSHKISMKMI) lie on the Cytoplasmic side of the membrane.

It is found in the cell membrane. In terms of biological role, may play a role in regulating axonal regeneration and plasticity in the adult central nervous system. In Danio rerio (Zebrafish), this protein is Leucine-rich repeat and immunoglobulin-like domain-containing nogo receptor-interacting protein 1-B (lingo1b).